Reading from the N-terminus, the 212-residue chain is Uracil phosphoribosyltransferase (212 aa).

5-phospho-alpha-D-ribose 1-diphosphate-binding positions include R78, R103, and 130 to 138; that span reads DPMLATGGS. Uracil is bound by residues I193 and 198–200; that span reads GDA. Position 199 (D199) interacts with 5-phospho-alpha-D-ribose 1-diphosphate.

This sequence belongs to the UPRTase family. Mg(2+) serves as cofactor.

It catalyses the reaction UMP + diphosphate = 5-phospho-alpha-D-ribose 1-diphosphate + uracil. It functions in the pathway pyrimidine metabolism; UMP biosynthesis via salvage pathway; UMP from uracil: step 1/1. Allosterically activated by GTP. Functionally, catalyzes the conversion of uracil and 5-phospho-alpha-D-ribose 1-diphosphate (PRPP) to UMP and diphosphate. In Ectopseudomonas mendocina (strain ymp) (Pseudomonas mendocina), this protein is Uracil phosphoribosyltransferase.